The following is a 294-amino-acid chain: MSNRLPVLPQYLLPKKALTIFAGKVAGAKAGRVTTGLIRWFIGKYGVNMTEAANPDIRSYASFNEFFTRALRSGARPLADDPYICPVDGAISQCGTIQKDQIFQAKGHSYSTTALVGGDHELAAQFDNGSFATVYLSPRDYHRIHMPCDGRLMRMIYVPGALFSVNPTTARGVPNLFARNERVVCVFEGAAGPFVLVLVGATIVGSMQTTWHGVVNATRNGNIREWHYDKQYLGLKKGEEMGRFLLGSTVVMLFPHDTLSFNPSWTAERPVRLGESMAQTVAAITPPAMQADVS.

Catalysis depends on charge relay system; for autoendoproteolytic cleavage activity residues D88, H145, and S248. The Schiff-base intermediate with substrate; via pyruvic acid; for decarboxylase activity role is filled by S248. S248 carries the pyruvic acid (Ser); by autocatalysis modification.

The protein belongs to the phosphatidylserine decarboxylase family. PSD-B subfamily. Prokaryotic type I sub-subfamily. As to quaternary structure, heterodimer of a large membrane-associated beta subunit and a small pyruvoyl-containing alpha subunit. It depends on pyruvate as a cofactor. Post-translationally, is synthesized initially as an inactive proenzyme. Formation of the active enzyme involves a self-maturation process in which the active site pyruvoyl group is generated from an internal serine residue via an autocatalytic post-translational modification. Two non-identical subunits are generated from the proenzyme in this reaction, and the pyruvate is formed at the N-terminus of the alpha chain, which is derived from the carboxyl end of the proenzyme. The autoendoproteolytic cleavage occurs by a canonical serine protease mechanism, in which the side chain hydroxyl group of the serine supplies its oxygen atom to form the C-terminus of the beta chain, while the remainder of the serine residue undergoes an oxidative deamination to produce ammonia and the pyruvoyl prosthetic group on the alpha chain. During this reaction, the Ser that is part of the protease active site of the proenzyme becomes the pyruvoyl prosthetic group, which constitutes an essential element of the active site of the mature decarboxylase.

It is found in the cell membrane. It carries out the reaction a 1,2-diacyl-sn-glycero-3-phospho-L-serine + H(+) = a 1,2-diacyl-sn-glycero-3-phosphoethanolamine + CO2. It participates in phospholipid metabolism; phosphatidylethanolamine biosynthesis; phosphatidylethanolamine from CDP-diacylglycerol: step 2/2. Functionally, catalyzes the formation of phosphatidylethanolamine (PtdEtn) from phosphatidylserine (PtdSer). The chain is Phosphatidylserine decarboxylase proenzyme from Herminiimonas arsenicoxydans.